The primary structure comprises 312 residues: Ribonuclease HIII (312 aa).

The region spanning 95-312 is the RNase H type-2 domain; that stretch reads MSILGSDEVG…TEKAFRLLKK (218 aa). A divalent metal cation contacts are provided by Asp-101, Glu-102, and Asp-206.

This sequence belongs to the RNase HII family. RnhC subfamily. It depends on Mn(2+) as a cofactor. The cofactor is Mg(2+).

It is found in the cytoplasm. It carries out the reaction Endonucleolytic cleavage to 5'-phosphomonoester.. Its function is as follows. Endonuclease that specifically degrades the RNA of RNA-DNA hybrids. In Bacillus mycoides (strain KBAB4) (Bacillus weihenstephanensis), this protein is Ribonuclease HIII.